The sequence spans 104 residues: L-rhamnose mutarotase (104 aa).

Y18 is a binding site for substrate. Catalysis depends on H22, which acts as the Proton donor. Substrate is bound by residues Y41 and 76–77; that span reads WW.

The protein belongs to the rhamnose mutarotase family. In terms of assembly, homodimer.

Its subcellular location is the cytoplasm. It carries out the reaction alpha-L-rhamnose = beta-L-rhamnose. The protein operates within carbohydrate metabolism; L-rhamnose metabolism. Functionally, involved in the anomeric conversion of L-rhamnose. This Acidiphilium cryptum (strain JF-5) protein is L-rhamnose mutarotase.